Consider the following 423-residue polypeptide: D-tagatose-1,6-bisphosphate aldolase subunit GatZ (423 aa).

It belongs to the GatZ/KbaZ family. GatZ subfamily. As to quaternary structure, forms a complex with GatY.

Its pathway is carbohydrate metabolism; D-tagatose 6-phosphate degradation; D-glyceraldehyde 3-phosphate and glycerone phosphate from D-tagatose 6-phosphate: step 2/2. Functionally, component of the tagatose-1,6-bisphosphate aldolase GatYZ that is required for full activity and stability of the Y subunit. Could have a chaperone-like function for the proper and stable folding of GatY. When expressed alone, GatZ does not show any aldolase activity. Is involved in the catabolism of galactitol. The protein is D-tagatose-1,6-bisphosphate aldolase subunit GatZ of Salmonella choleraesuis (strain SC-B67).